Here is a 427-residue protein sequence, read N- to C-terminus: NADPH-dependent stearoyl-CoA 9-desaturase (427 aa).

8 residues coordinate Fe cation: H90, H94, H125, H129, H130, H304, H308, and H309.

The protein belongs to the fatty acid desaturase type 1 family. In terms of assembly, interacts with the electron transfer protein Rv3230c to form a functional acyl-CoA desaturase complex. It depends on Fe(2+) as a cofactor. Is rapidly degraded by a mycobacterial protein degradation system that specifically targets the residues LAA at the C-terminus, leading to a post-translational proteolytic regulation of DesA3 essential activity.

Its subcellular location is the cell membrane. The enzyme catalyses octadecanoyl-CoA + NADPH + O2 + H(+) = (9Z)-octadecenoyl-CoA + NADP(+) + 2 H2O. It functions in the pathway lipid metabolism; fatty acid metabolism. Is likely involved in the aerobic desaturation system responsible for the synthesis of oleic acid from stearoyl-CoA; oleic acid is a precursor of mycobacterial membrane phospholipids and triglycerides. Catalyzes the conversion of stearoyl-CoA to oleoyl-CoA by introduction of a cis double bond between carbons 9 and 10 of the acyl chain. Requires the electron transfer partner Rv3230c to pass two electrons from NADPH to its active site diiron center. Is also able to catalyze the 9-desaturation of palmitoyl-CoA to palmitoleoyl-CoA. The polypeptide is NADPH-dependent stearoyl-CoA 9-desaturase (desA3) (Mycobacterium tuberculosis (strain CDC 1551 / Oshkosh)).